A 316-amino-acid chain; its full sequence is DNA-directed RNA polymerase subunit alpha (316 aa).

The interval 1-230 is alpha N-terminal domain (alpha-NTD); it reads MIEFEKPNIH…EHLAMFVDLT (230 aa). The segment at 247–316 is alpha C-terminal domain (alpha-CTD); that stretch reads KEKMLEMTIE…DLGLSLRKED (70 aa).

Belongs to the RNA polymerase alpha chain family. In terms of assembly, homodimer. The RNAP catalytic core consists of 2 alpha, 1 beta, 1 beta' and 1 omega subunit. When a sigma factor is associated with the core the holoenzyme is formed, which can initiate transcription.

The enzyme catalyses RNA(n) + a ribonucleoside 5'-triphosphate = RNA(n+1) + diphosphate. In terms of biological role, DNA-dependent RNA polymerase catalyzes the transcription of DNA into RNA using the four ribonucleoside triphosphates as substrates. The polypeptide is DNA-directed RNA polymerase subunit alpha (Levilactobacillus brevis (strain ATCC 367 / BCRC 12310 / CIP 105137 / JCM 1170 / LMG 11437 / NCIMB 947 / NCTC 947) (Lactobacillus brevis)).